Consider the following 306-residue polypeptide: Armadillo repeat-containing protein 10 (306 aa).

Residues 7–29 (VGWVAAGLVLGAGACYCIYRLTR) form a helical membrane-spanning segment. Residue Ser-43 is modified to Phosphoserine. Phosphothreonine is present on Thr-48. The ARM repeat unit spans residues 101–143 (GGIPIVGNKINSLNQSIKEKALNALNNLSVNVENQTKIKIYVP).

Interacts with the DNA-binding domain of p53/TP53.

The protein resides in the endoplasmic reticulum membrane. It is found in the mitochondrion outer membrane. Functionally, may play a role in cell survival and cell growth. May suppress the transcriptional activity of p53/TP53. The chain is Armadillo repeat-containing protein 10 (Armc10) from Mus musculus (Mouse).